Here is a 227-residue protein sequence, read N- to C-terminus: Abasic site processing protein YoaM (227 aa).

Cys-2 (nucleophile) is an active-site residue. Cys-2 is subject to Thiazolidine linkage to a ring-opened DNA abasic site. Glu-106 is an active-site residue.

Belongs to the SOS response-associated peptidase family.

With respect to regulation, formation and reversal of DNA-protein cross-link depends on DNA context. Catalyzes formation of the thiazolidine linkage in presence of abasic sites in single-stranded DNA. Mediates the reversal of the thiazolidine cross-link in presence of double stranded DNA. Its function is as follows. Sensor of abasic sites in single-stranded DNA (ssDNA) required to preserve genome integrity by promoting error-free repair of abasic sites. Recognizes and binds abasic sites in ssDNA at replication forks and chemically modifies the lesion by forming a covalent cross-link with DNA: forms a stable thiazolidine linkage between a ring-opened abasic site and the alpha-amino and sulfhydryl substituents of its N-terminal catalytic cysteine residue. The DNA-protein cross-link is then reversed: able to catalyze the reversal of the thiazolidine cross-link and cycle between a cross-link and a non-cross-linked state depending on DNA context: mediates self-reversal of the thiazolidine cross-link in double stranded DNA. May act as a protease: mediates autocatalytic processing of its N-terminal methionine in order to expose the catalytic cysteine. The chain is Abasic site processing protein YoaM (yoaM) from Bacillus subtilis (strain 168).